The primary structure comprises 48 residues: uncharacterized protein (48 aa).

Residues 1-48 (MSRRMGGGMPKINLSGAIPNNNTSTPSTPTLRSSVSVSSSNSRGLFLA) form a disordered region. The segment covering 20–48 (NNNTSTPSTPTLRSSVSVSSSNSRGLFLA) has biased composition (low complexity).

This is an uncharacterized protein from Dictyostelium discoideum (Social amoeba).